Consider the following 218-residue polypeptide: MGTLLALVVGAVLVSSAWGGCVEVDSETEAVYGMTFKILCISCKRRSETTAETFTEWTFRQKGTEEFVKILRYENEVLQLEEDERFEGRVVWNGSRGTKDLQDLSIFITNVTYNHSGDYECHVYRLLFFDNYEHNTSVVKKIHLEVVDKANRDMASIVSEIMMYVLIVVLTIWLVAEMVYCYKKIAAATEAAAQENASEYLAITSESKENCTGVQVAE.

The signal sequence occupies residues 1–18 (MGTLLALVVGAVLVSSAW). Residues 19–157 (GGCVEVDSET…DKANRDMASI (139 aa)) lie on the Extracellular side of the membrane. 2 disulfide bridges follow: Cys21/Cys43 and Cys40/Cys121. The region spanning 22-150 (VEVDSETEAV…KIHLEVVDKA (129 aa)) is the Ig-like C2-type domain. N-linked (GlcNAc...) asparagine glycans are attached at residues Asn93, Asn110, Asn114, and Asn135. Residues 158 to 179 (VSEIMMYVLIVVLTIWLVAEMV) traverse the membrane as a helical segment. The Cytoplasmic segment spans residues 180–218 (YCYKKIAAATEAAAQENASEYLAITSESKENCTGVQVAE).

This sequence belongs to the sodium channel auxiliary subunit SCN1B (TC 8.A.17) family. As to quaternary structure, a voltage-gated sodium (Nav) channel consists of an ion-conducting pore-forming alpha subunit functional on its own that is regulated by one or more beta subunits. Interacts with SCN1A; regulatory subunit of SCN1A/Nav1.1. Interacts with SCN3A; regulatory subunit of SCN3A/Nav1.3. Interacts with SCN4A; regulatory subunit of SCN4A/Nav1.4. Interacts with SCN5A; regulatory subunit of SCN5A/Nav1.5. Interacts with SCN8A; regulatory subunit of SCN8A/Nav1.6. Interacts with SCN9A; regulatory subunit of SCN9A/Nav1.7. Interacts with SCN10A; regulatory subunit of SCN10A/Nav1.8. Interacts with NFASC. Interacts with TMEM65. As to expression, detected in brain (at protein level). Expressed in brain, heart, skeletal muscle and spinal cord.

Its subcellular location is the cell membrane. It is found in the perikaryon. The protein resides in the cell projection. It localises to the axon. Functionally, regulatory subunit of multiple voltage-gated sodium (Nav) channels directly mediating the depolarization of excitable membranes. Navs, also called VGSCs (voltage-gated sodium channels) or VDSCs (voltage-dependent sodium channels), operate by switching between closed and open conformations depending on the voltage difference across the membrane. In the open conformation they allow Na(+) ions to selectively pass through the pore, along their electrochemical gradient. The influx of Na+ ions provokes membrane depolarization, initiating the propagation of electrical signals throughout cells and tissues. The accessory beta subunits participate in localization and functional modulation of the Nav channels. Modulates the activity of SCN1A/Nav1.1, SCN2A/Nav1.2, SCN3A/Nav1.3, SCN4A/Nav1.4, SCN5A/Nav1.5, SCN8A/Nav1.6, SCN9A/Nav1.7 and SCN10A/Nav1.8. The protein is Sodium channel regulatory subunit beta-1 of Rattus norvegicus (Rat).